A 630-amino-acid polypeptide reads, in one-letter code: A-type voltage-gated potassium channel KCND2 (630 aa).

The Cytoplasmic portion of the chain corresponds to 1–184 (MAAGVAAWLP…FENPHTSTMA (184 aa)). The tract at residues 2–20 (AAGVAAWLPFARAAAIGWM) is interaction with KCNIP1, KCNIP2, and other family members. A Phosphothreonine modification is found at T38. Positions 71–90 (ERDFFYHPETQQYFFDRDPD) are interaction with KCNIP1. Positions 105, 111, 132, and 133 each coordinate Zn(2+). The helical transmembrane segment at 185–206 (LVFYYVTGFFIAVSVIANVVET) threads the bilayer. Topologically, residues 207-226 (VPCGSSPGHIKELPCGERYA) are extracellular. Residues 227–249 (VAFFCLDTACVMIFTVEYLLRLA) traverse the membrane as a helical segment. The Cytoplasmic segment spans residues 250-256 (AAPSRYR). Residues 257–281 (FVRSVMSIIDVVAILPYYIGLVMTD) form a helical membrane-spanning segment. The Extracellular segment spans residues 282–287 (NEDVSG). Residues 288 to 307 (AFVTLRVFRVFRIFKFSRHS) traverse the membrane as a helical; Voltage-sensor segment. The Cytoplasmic portion of the chain corresponds to 308–321 (QGLRILGYTLKSCA). The interval 308–321 (QGLRILGYTLKSCA) is S4-S5 linker. The helical transmembrane segment at 322–345 (SELGFLLFSLTMAIIIFATVMFYA) threads the bilayer. Over 346-357 (EKGSSASKFTSI) the chain is Extracellular. Residues 358 to 369 (PAAFWYTIVTMT) constitute an intramembrane region (helical). Positions 370, 371, 372, and 373 each coordinate K(+). The Selectivity filter motif lies at 370–375 (TLGYGD). The stretch at 370–377 (TLGYGDMV) is an intramembrane region. Residues 378-380 (PKT) are Extracellular-facing. Residues 381 to 403 (IAGKIFGSICSLSGVLVIALPVP) traverse the membrane as a helical segment. The Cytoplasmic portion of the chain corresponds to 404–630 (VIVSNFSRIY…GGNIVRVSAL (227 aa)). The tract at residues 474–489 (FETQHHHLLHCLEKTT) is required for dendritic targeting. The tract at residues 474–630 (FETQHHHLLH…GGNIVRVSAL (157 aa)) is important for normal channel activation and inactivation, for interaction with KCNIP2, and probably other family members as well. Phosphoserine occurs at positions 548, 552, 572, and 575. Residues 600 to 622 (IPTPPVTTPEGDDRPESPEYSGG) form a disordered region. Phosphothreonine is present on residues T602 and T607. At S616 the chain carries Phosphoserine. Positions 627-630 (VSAL) match the PDZ-binding motif.

It belongs to the potassium channel family. D (Shal) (TC 1.A.1.2) subfamily. Kv4.2/KCND2 sub-subfamily. In terms of assembly, homotetramer or heterotetramer with KCND1 or KCND3. Associates with the regulatory subunits KCNIP2, KCNIP3 and KCNIP4. Interacts with the regulatory subunit KCNIP1; this interaction mediates the capture of both the N- and C-terminus of KCND2, preventing N-type inactivation and stabilizing the S6 conformation, thereby accelerating closed state inactivation and recovery. In vivo, probably exists as heteromeric complex containing variable proportions of KCND1, KCND2, KCND3, KCNIP1, KCNIP2, KCNIP3, KCNIP4, DPP6 and DPP10. The tetrameric channel can associate with up to four regulatory subunits, such as KCNIP2 or KCNIP4. Interaction with four KCNIP4 chains does not reduce interaction with DPP10. Interacts with DLG4 and NCS1/FREQ. Interacts with DLG1. Probably part of a complex consisting of KCNIP1, KCNIP2 isoform 3 and KCND2. Interacts with FLNA, FLNC and DPP10. Identified in a complex with cAMP-dependent protein kinase (PKA), CAV3, AKAP6 and KCND3 in cardiac myocytes. Interacts (via S1 and S2 helices) with DPP6; this interaction stabilizes the conformation of the S1-S2 helices and facilitates S4 conformational change, including S4 sliding up and down, thereby accelerating activation, inactivation, and recovery. Post-translationally, phosphorylation in response to MAPK activation is increased in stimulated dendrites. Interaction with KCNIP2 and DPP6 propomtes phosphorylation by PKA at Ser-552. Phosphorylation at Ser-552 has no effect on interaction with KCNIP3, but is required for the regulation of channel activity by KCNIP3. Phosphorylation at Ser-552 leads to KCND2 internalization. Phosphorylated by MAPK in response to signaling via the metabotropic glutamate receptor GRM5. Phosphorylation at Ser-616 is required for the down-regulation of neuronal A-type currents in response to signaling via GRM5.

The protein resides in the cell membrane. It localises to the cell projection. Its subcellular location is the dendrite. The protein localises to the synapse. It is found in the perikaryon. The protein resides in the postsynaptic cell membrane. It localises to the dendritic spine. Its subcellular location is the sarcolemma. The protein localises to the cell junction. It is found in the membrane. The protein resides in the caveola. The enzyme catalyses K(+)(in) = K(+)(out). Voltage-gated potassium channel that mediates transmembrane potassium transport in excitable membranes, primarily in the brain, but also in rodent heart. Mediates the major part of the dendritic A-type current I(SA) in brain neurons. This current is activated at membrane potentials that are below the threshold for action potentials. It regulates neuronal excitability, prolongs the latency before the first spike in a series of action potentials, regulates the frequency of repetitive action potential firing, shortens the duration of action potentials and regulates the back-propagation of action potentials from the neuronal cell body to the dendrites. Contributes to the regulation of the circadian rhythm of action potential firing in suprachiasmatic nucleus neurons, which regulates the circadian rhythm of locomotor activity. Functions downstream of the metabotropic glutamate receptor GRM5 and plays a role in neuronal excitability and in nociception mediated by activation of GRM5. Mediates the transient outward current I(to) in rodent heart left ventricle apex cells, but not in human heart, where this current is mediated by another family member. Forms tetrameric potassium-selective channels through which potassium ions pass in accordance with their electrochemical gradient. The channel alternates between opened and closed conformations in response to the voltage difference across the membrane. Can form functional homotetrameric channels and heterotetrameric channels that contain variable proportions of KCND2 and KCND3; channel properties depend on the type of pore-forming alpha subunits that are part of the channel. In vivo, membranes probably contain a mixture of heteromeric potassium channel complexes. Interaction with specific isoforms of the regulatory subunits KCNIP1, KCNIP2, KCNIP3 or KCNIP4 strongly increases expression at the cell surface and thereby increases channel activity; it modulates the kinetics of channel activation and inactivation, shifts the threshold for channel activation to more negative voltage values, shifts the threshold for inactivation to less negative voltages and accelerates recovery after inactivation. Likewise, interaction with DPP6 or DPP10 promotes expression at the cell membrane and regulates both channel characteristics and activity. Upon depolarization, the channel goes from a resting closed state (C state) to an activated but non-conducting state (C* state), from there, the channel may either inactivate (I state) or open (O state). The polypeptide is A-type voltage-gated potassium channel KCND2 (Mustela putorius furo (European domestic ferret)).